The chain runs to 584 residues: Putative sel1-like repeat-containing protein L18 (584 aa).

Sel1-like repeat units follow at residues 132–167 (SMAQ…DQNN), 168–203 (KYGL…CQNF), 204–237 (SKAQ…NQNH), 238–273 (SSAQ…SQGL), 274–309 (NSAK…YDDG), and 316–351 (EVAM…NTKN).

The protein is Putative sel1-like repeat-containing protein L18 of Acanthamoeba polyphaga (Amoeba).